Consider the following 82-residue polypeptide: MNPIVAAASVVSAGLAVGLAAIGPGMGQGTAAGYAVEGIARQPEAEGKIRGALLLSFAFMESLTIYGLVVALALLFANPFAS.

2 consecutive transmembrane segments (helical) span residues 3 to 23 (PIVA…AAIG) and 57 to 77 (FAFM…LLFA).

Belongs to the ATPase C chain family. In terms of assembly, F-type ATPases have 2 components, F(1) - the catalytic core - and F(0) - the membrane proton channel. F(1) has five subunits: alpha(3), beta(3), gamma(1), delta(1), epsilon(1). F(0) has four main subunits: a(1), b(1), b'(1) and c(10-14). The alpha and beta chains form an alternating ring which encloses part of the gamma chain. F(1) is attached to F(0) by a central stalk formed by the gamma and epsilon chains, while a peripheral stalk is formed by the delta, b and b' chains.

Its subcellular location is the plastid. The protein resides in the chloroplast thylakoid membrane. F(1)F(0) ATP synthase produces ATP from ADP in the presence of a proton or sodium gradient. F-type ATPases consist of two structural domains, F(1) containing the extramembraneous catalytic core and F(0) containing the membrane proton channel, linked together by a central stalk and a peripheral stalk. During catalysis, ATP synthesis in the catalytic domain of F(1) is coupled via a rotary mechanism of the central stalk subunits to proton translocation. Functionally, key component of the F(0) channel; it plays a direct role in translocation across the membrane. A homomeric c-ring of between 10-14 subunits forms the central stalk rotor element with the F(1) delta and epsilon subunits. The polypeptide is ATP synthase subunit c, chloroplastic (Tetradesmus obliquus (Green alga)).